The following is a 236-amino-acid chain: Enolase-phosphatase E1 (236 aa).

Belongs to the HAD-like hydrolase superfamily. MasA/MtnC family. As to quaternary structure, monomer. The cofactor is Mg(2+).

The enzyme catalyses 5-methylsulfanyl-2,3-dioxopentyl phosphate + H2O = 1,2-dihydroxy-5-(methylsulfanyl)pent-1-en-3-one + phosphate. It participates in amino-acid biosynthesis; L-methionine biosynthesis via salvage pathway; L-methionine from S-methyl-5-thio-alpha-D-ribose 1-phosphate: step 3/6. It functions in the pathway amino-acid biosynthesis; L-methionine biosynthesis via salvage pathway; L-methionine from S-methyl-5-thio-alpha-D-ribose 1-phosphate: step 4/6. Functionally, bifunctional enzyme that catalyzes the enolization of 2,3-diketo-5-methylthiopentyl-1-phosphate (DK-MTP-1-P) into the intermediate 2-hydroxy-3-keto-5-methylthiopentenyl-1-phosphate (HK-MTPenyl-1-P), which is then dephosphorylated to form the acireductone 1,2-dihydroxy-3-keto-5-methylthiopentene (DHK-MTPene). The polypeptide is Enolase-phosphatase E1 (Frankia alni (strain DSM 45986 / CECT 9034 / ACN14a)).